Here is a 129-residue protein sequence, read N- to C-terminus: Lysozyme C (129 aa).

The C-type lysozyme domain occupies K1 to L129. 4 cysteine pairs are disulfide-bonded: C6–C127, C30–C115, C64–C80, and C76–C94. Catalysis depends on residues E35 and D52.

The protein belongs to the glycosyl hydrolase 22 family. In terms of assembly, monomer.

The protein localises to the secreted. It catalyses the reaction Hydrolysis of (1-&gt;4)-beta-linkages between N-acetylmuramic acid and N-acetyl-D-glucosamine residues in a peptidoglycan and between N-acetyl-D-glucosamine residues in chitodextrins.. Its function is as follows. Lysozymes have primarily a bacteriolytic function; those in tissues and body fluids are associated with the monocyte-macrophage system and enhance the activity of immunoagents. The polypeptide is Lysozyme C (LYZ) (Callipepla californica (California quail)).